Consider the following 577-residue polypeptide: Aspartate--tRNA(Asp/Asn) ligase (577 aa).

Glutamate 171 lines the L-aspartate pocket. The tract at residues 195–198 is aspartate; sequence QLFK. Residue arginine 217 participates in L-aspartate binding. ATP-binding positions include 217–219 and glutamine 226; that span reads RDE. Histidine 444 contributes to the L-aspartate binding site. Residue glutamate 474 participates in ATP binding. Arginine 481 contributes to the L-aspartate binding site. 526 to 529 is a binding site for ATP; it reads GFDR.

This sequence belongs to the class-II aminoacyl-tRNA synthetase family. Type 1 subfamily. As to quaternary structure, homodimer.

The protein localises to the cytoplasm. The catalysed reaction is tRNA(Asx) + L-aspartate + ATP = L-aspartyl-tRNA(Asx) + AMP + diphosphate. Its function is as follows. Aspartyl-tRNA synthetase with relaxed tRNA specificity since it is able to aspartylate not only its cognate tRNA(Asp) but also tRNA(Asn). Reaction proceeds in two steps: L-aspartate is first activated by ATP to form Asp-AMP and then transferred to the acceptor end of tRNA(Asp/Asn). The chain is Aspartate--tRNA(Asp/Asn) ligase from Helicobacter pylori (strain G27).